A 277-amino-acid polypeptide reads, in one-letter code: MQRLFLLVAVMLLSGCLTAPPKEAARPTLMPRAQSYKDLTHLPAPTGKIFVSVYNIQDETGQFKPYPASNFSTAVPQSATAMLVTALKDSRWFIPLERQGLQNLLNERKIIRAAQENGTVAINNRIPLQSLTAANIMVEGSIIGYESNVKSGGVGARYFGIGADTQYQLDQIAVNLRVVNVSTGEILSSVNTSKTILSYEVQAGVFRFIDYQRLLEGEVGYTSNEPVMLCLMSAIETGVIFLINDGIDRGLWDLQNKAERQNDILVKYRHMSVPPES.

A signal peptide spans 1-15 (MQRLFLLVAVMLLSG). A lipid anchor (N-palmitoyl cysteine) is attached at cysteine 16. Cysteine 16 carries the S-diacylglycerol cysteine lipid modification.

Belongs to the CsgG family.

It localises to the cell membrane. In terms of biological role, may be involved in the biogenesis of curli organelles. This is Curli production assembly/transport component CsgG (csgG) from Escherichia coli O157:H7.